A 452-amino-acid polypeptide reads, in one-letter code: Transcription factor SMP1 (452 aa).

The MADS-box domain occupies 3 to 57 (RRKIEIEPIKDDRNRTVTFIKRKAGLFKKAHELSVLCQVDIAVIILGSNNTFYEY). Residues 58–87 (SSVDMSNLLNVHQNNTDLPHNIIEPSDYGD) constitute a DNA-binding region (mef2-type). The tract at residues 97–142 (NERKRRRRRATVLQPASHSGSCTVSSQDSSSVQNNGNLSAPLASND) is disordered. Residues 115–127 (SGSCTVSSQDSSS) show a composition bias toward low complexity.

It belongs to the MEF2 family. As to quaternary structure, can heterodimerize with RLM1. Interacts with HOG1. Phosphorylated by HOG1.

It localises to the nucleus. Its function is as follows. Transcription factor that controls part of the HOG1-mediated osmostress responses. Binds to the DNA sequence 5'-ACTACTA[TA](4)TAG-3'. Does not appear to function in the MPK1 pathway. This is Transcription factor SMP1 (SMP1) from Saccharomyces cerevisiae (strain ATCC 204508 / S288c) (Baker's yeast).